The primary structure comprises 147 residues: Acidic phospholipase A2 beta-bungarotoxin A3 chain (147 aa).

The first 19 residues, 1-19 (MYPAHLLVLSAVCVSLLGA), serve as a signal peptide directing secretion. Residues 20–27 (ANIPPHPL) constitute a propeptide that is removed on maturation. Cystine bridges form between Cys54–Cys146, Cys56–Cys72, Cys71–Cys127, Cys78–Cys120, Cys88–Cys113, and Cys106–Cys118. Residues Tyr55, Gly57, and Gly59 each coordinate Ca(2+). His75 is a catalytic residue. Asp76 serves as a coordination point for Ca(2+). The active site involves Asp121.

Belongs to the phospholipase A2 family. Group I subfamily. D49 sub-subfamily. In terms of assembly, heterodimer; disulfide-linked. The A chains have phospholipase A2 activity and the B chains show homology with the basic protease inhibitors. The A3 chain is found in beta-5 bungarotoxins. Ca(2+) is required as a cofactor. Expressed by the venom gland.

It is found in the secreted. The enzyme catalyses a 1,2-diacyl-sn-glycero-3-phosphocholine + H2O = a 1-acyl-sn-glycero-3-phosphocholine + a fatty acid + H(+). Snake venom phospholipase A2 (PLA2) that inhibits neuromuscular transmission by blocking acetylcholine release from the nerve termini. PLA2 catalyzes the calcium-dependent hydrolysis of the 2-acyl groups in 3-sn-phosphoglycerides. This Bungarus multicinctus (Many-banded krait) protein is Acidic phospholipase A2 beta-bungarotoxin A3 chain.